The chain runs to 255 residues: Proteasome subunit alpha type-3 (255 aa).

Residue Ser2 is modified to N-acetylserine. Lys57, Lys206, and Lys230 each carry N6-acetyllysine. A phosphoserine mark is found at Ser243 and Ser250.

The protein belongs to the peptidase T1A family. As to quaternary structure, the 26S proteasome consists of a 20S proteasome core and two 19S regulatory subunits. The 20S proteasome core is a barrel-shaped complex made of 28 subunits that are arranged in four stacked rings. The two outer rings are each formed by seven alpha subunits, and the two inner rings are formed by seven beta subunits. The proteolytic activity is exerted by three beta-subunits PSMB5, PSMB6 and PSMB7. Interacts with AURKB. Interacts with CDKN1A. Interacts with MDM2 and RB1. Interacts with the C-terminus of TBXA2R isoform 2. Interacts with DNAJB2. In terms of assembly, (Microbial infection) Interacts with HIV-1 Tat protein. (Microbial infection) Interacts with hepatitis C virus (HCV) F protein. As to quaternary structure, (Microbial infection) Interacts with Epstein-Barr virus EBNA3 proteins.

Its subcellular location is the cytoplasm. The protein localises to the nucleus. In terms of biological role, component of the 20S core proteasome complex involved in the proteolytic degradation of most intracellular proteins. This complex plays numerous essential roles within the cell by associating with different regulatory particles. Associated with two 19S regulatory particles, forms the 26S proteasome and thus participates in the ATP-dependent degradation of ubiquitinated proteins. The 26S proteasome plays a key role in the maintenance of protein homeostasis by removing misfolded or damaged proteins that could impair cellular functions, and by removing proteins whose functions are no longer required. Associated with the PA200 or PA28, the 20S proteasome mediates ubiquitin-independent protein degradation. This type of proteolysis is required in several pathways including spermatogenesis (20S-PA200 complex) or generation of a subset of MHC class I-presented antigenic peptides (20S-PA28 complex). Binds to the C-terminus of CDKN1A and thereby mediates its degradation. Negatively regulates the membrane trafficking of the cell-surface thromboxane A2 receptor (TBXA2R) isoform 2. This is Proteasome subunit alpha type-3 from Homo sapiens (Human).